A 90-amino-acid polypeptide reads, in one-letter code: Long neurotoxin OH-34 (90 aa).

A signal peptide spans 1–20 (KTLLLTLVVVTILCLDLGYT). 5 disulfide bridges follow: cysteine 23-cysteine 41, cysteine 34-cysteine 62, cysteine 47-cysteine 51, cysteine 66-cysteine 77, and cysteine 78-cysteine 83.

This sequence belongs to the three-finger toxin family. Long-chain subfamily. Type II alpha-neurotoxin sub-subfamily. In terms of tissue distribution, expressed by the venom gland.

It localises to the secreted. Functionally, binds with high affinity to muscular (alpha-1/CHRNA1) and neuronal (alpha-7/CHRNA7) nicotinic acetylcholine receptor (nAChR) and inhibits acetylcholine from binding to the receptor, thereby impairing neuromuscular and neuronal transmission. The protein is Long neurotoxin OH-34 of Ophiophagus hannah (King cobra).